The chain runs to 1180 residues: DNA-directed RNA polymerase subunit beta (1180 aa).

The protein belongs to the RNA polymerase beta chain family. The RNAP catalytic core consists of 2 alpha, 1 beta, 1 beta' and 1 omega subunit. When a sigma factor is associated with the core the holoenzyme is formed, which can initiate transcription.

It carries out the reaction RNA(n) + a ribonucleoside 5'-triphosphate = RNA(n+1) + diphosphate. Functionally, DNA-dependent RNA polymerase catalyzes the transcription of DNA into RNA using the four ribonucleoside triphosphates as substrates. This chain is DNA-directed RNA polymerase subunit beta, found in Macrococcus caseolyticus (strain JCSC5402) (Macrococcoides caseolyticum).